A 729-amino-acid chain; its full sequence is Fatty acid oxidation complex subunit alpha (729 aa).

Residues M1 to K189 are enoyl-CoA hydratase/isomerase. D296 provides a ligand contact to substrate. Residues E311–A729 form a 3-hydroxyacyl-CoA dehydrogenase region. NAD(+) contacts are provided by residues M324, D343, V400–E402, K407, and S429. The active-site For 3-hydroxyacyl-CoA dehydrogenase activity is H450. Residue N453 participates in NAD(+) binding. Residues N500 and Y660 each contribute to the substrate site.

It in the N-terminal section; belongs to the enoyl-CoA hydratase/isomerase family. This sequence in the C-terminal section; belongs to the 3-hydroxyacyl-CoA dehydrogenase family. As to quaternary structure, heterotetramer of two alpha chains (FadB) and two beta chains (FadA).

The enzyme catalyses a (3S)-3-hydroxyacyl-CoA + NAD(+) = a 3-oxoacyl-CoA + NADH + H(+). The catalysed reaction is a (3S)-3-hydroxyacyl-CoA = a (2E)-enoyl-CoA + H2O. It catalyses the reaction a 4-saturated-(3S)-3-hydroxyacyl-CoA = a (3E)-enoyl-CoA + H2O. It carries out the reaction (3S)-3-hydroxybutanoyl-CoA = (3R)-3-hydroxybutanoyl-CoA. The enzyme catalyses a (3Z)-enoyl-CoA = a 4-saturated (2E)-enoyl-CoA. The catalysed reaction is a (3E)-enoyl-CoA = a 4-saturated (2E)-enoyl-CoA. It functions in the pathway lipid metabolism; fatty acid beta-oxidation. Involved in the aerobic and anaerobic degradation of long-chain fatty acids via beta-oxidation cycle. Catalyzes the formation of 3-oxoacyl-CoA from enoyl-CoA via L-3-hydroxyacyl-CoA. It can also use D-3-hydroxyacyl-CoA and cis-3-enoyl-CoA as substrate. The polypeptide is Fatty acid oxidation complex subunit alpha (Escherichia coli (strain SE11)).